Here is a 378-residue protein sequence, read N- to C-terminus: Mannitol-1-phosphate 5-dehydrogenase (378 aa).

An NAD(+)-binding site is contributed by 4 to 15 (SVHFGAGNIGRG).

It belongs to the mannitol dehydrogenase family.

The catalysed reaction is D-mannitol 1-phosphate + NAD(+) = beta-D-fructose 6-phosphate + NADH + H(+). The polypeptide is Mannitol-1-phosphate 5-dehydrogenase (Streptococcus pneumoniae (strain ATCC BAA-255 / R6)).